The chain runs to 246 residues: Probable transcriptional regulatory protein YebC (246 aa).

Residues 1–20 (MAGHSKWANTRHRKAAQDAK) form a disordered region.

This sequence belongs to the TACO1 family.

It localises to the cytoplasm. The polypeptide is Probable transcriptional regulatory protein YebC (Shigella flexneri).